The following is a 312-amino-acid chain: Olfactory receptor 6C68 (312 aa).

At 1-23 (MRKHTAITTFILLGLTEDPQLQV) the chain is on the extracellular side. Residues 24–44 (LLFMFLFITYMLSVTGKLTII) form a helical membrane-spanning segment. Topologically, residues 45–55 (ALTMLDPHLKT) are cytoplasmic. Residues 56–76 (PMYFFLQNLSFLEISFTATCV) traverse the membrane as a helical segment. Residues 77–95 (PRFLYSISTGNKIITYNAC) lie on the Extracellular side of the membrane. C95 and C177 are joined by a disulfide. The helical transmembrane segment at 96 to 116 (VIQLFFADLFGVTEFFLLATM) threads the bilayer. Over 117–143 (SYDRYVAICKPLHYMAIMSNKVCKTMV) the chain is Cytoplasmic. The helical transmembrane segment at 144–164 (ICCWMAALMIILPPLSLGFHL) threads the bilayer. The Extracellular segment spans residues 165–197 (EFCDSNVINHFGCDALPILKIPCSDTSLIEQMV). The helical transmembrane segment at 198-218 (VASAVLTFIITLVCVVLSYTY) threads the bilayer. At 219–239 (IIRTILKFPSVQQKKKAFSTC) the chain is on the cytoplasmic side. A helical membrane pass occupies residues 240 to 260 (SSHITVVSITYGSCIFIYIKP). Residues 261-271 (SAKEEVNINKG) are Extracellular-facing. A helical membrane pass occupies residues 272 to 292 (VSVLISSISPMLNSFIYTLRN). Residues 293 to 312 (EQVKQAFHDSLKKIAFRLKK) lie on the Cytoplasmic side of the membrane.

Belongs to the G-protein coupled receptor 1 family.

The protein localises to the cell membrane. Its function is as follows. Odorant receptor. This is Olfactory receptor 6C68 (OR6C68) from Homo sapiens (Human).